The primary structure comprises 409 residues: Pleckstrin homology domain-containing family O member 1 (409 aa).

The interval 1 to 20 (MMKKNNSTKRGPQDGNHQCA) is disordered. The PH domain maps to 21–132 (PPEKVGWVRK…WINALNSAIT (112 aa)). The interaction with capping proteins (CPs) stretch occupies residues 133–193 (RAKNRVLDEV…MLTLDLIQEE (61 aa)). Positions 136–308 (NRVLDEVTVE…PHAPGQLSRI (173 aa)) are interaction with ATM, CKIP, IFP35 and NMI. Disordered regions lie at residues 218–304 (LAGS…APGQ), 325–350 (EVQGLGDGKRKAKEPPRSPPDSESEQ), and 390–409 (TPDSHLRQTTQHSQYRKSLM). Serine 227 and serine 271 each carry phosphoserine. Residues 308 to 409 (IQDLVARKLE…QHSQYRKSLM (102 aa)) are negative regulator of AP-1 activity. Basic and acidic residues predominate over residues 331 to 340 (DGKRKAKEPP). Serine 342 carries the phosphoserine modification. The segment covering 390 to 402 (TPDSHLRQTTQHS) has biased composition (polar residues).

Heterodimer or homodimer. Interacts with CK2 and actin capping subunits (capping protein CP-alpha and CP-beta). CKIP1 and CK2 together inhibit the activity of actin capping protein at the barbed ends of actin filaments. Interacts with ATM, IFP35, JUN, JUND, NMI and PI3K. Interacts with AKT1, AKT2 and AKT3 (each isozyme of PKB), PtdIns(3,5)P2, PtdIns(4,5)P2 and PtdIns(3,4,5)P2. Post-translationally, C-terminal fragments could be released during apoptosis via caspase-3-dependent cleavage.

It is found in the membrane. The protein resides in the nucleus. Its subcellular location is the cytoplasm. Its function is as follows. Plays a role in the regulation of the actin cytoskeleton through its interactions with actin capping protein (CP). May function to target CK2 to the plasma membrane thereby serving as an adapter to facilitate the phosphorylation of CP by protein kinase 2 (CK2). Appears to target ATM to the plasma membrane. Also implicated in PI3K-regulated muscle differentiation, the regulation of AP-1 activity (plasma membrane bound AP-1 regulator that translocates to the nucleus) and the promotion of apoptosis induced by tumor necrosis factor TNF. When bound to PKB, it inhibits it probably by decreasing PKB level of phosphorylation. This chain is Pleckstrin homology domain-containing family O member 1 (PLEKHO1), found in Bos taurus (Bovine).